The sequence spans 130 residues: Small ribosomal subunit protein uS11 (130 aa).

The protein belongs to the universal ribosomal protein uS11 family. As to quaternary structure, part of the 30S ribosomal subunit. Interacts with proteins S7 and S18. Binds to IF-3.

Located on the platform of the 30S subunit, it bridges several disparate RNA helices of the 16S rRNA. Forms part of the Shine-Dalgarno cleft in the 70S ribosome. The chain is Small ribosomal subunit protein uS11 from Xylella fastidiosa (strain M12).